The primary structure comprises 340 residues: Cytoskeleton protein RodZ (340 aa).

Residues 1–111 (MNTEATQEKS…LGKQRKKRDG (111 aa)) are Cytoplasmic-facing. One can recognise an HTH cro/C1-type domain in the interval 19 to 79 (LRTAREQMGL…RLVHVPEEEL (61 aa)). A DNA-binding region (H-T-H motif) is located at residues 30–49 (QQNVAERLCLKLSTIRDIEE). A helical; Signal-anchor for type II membrane protein membrane pass occupies residues 112–132 (WLMIFTWLVLFVVLGLTGAWW). The Periplasmic segment spans residues 133–340 (WQNHKAAQDD…QVARLTVGAP (208 aa)). Residues 162–252 (ALSDDNANGG…AAPLPTGSAA (91 aa)) are disordered. The span at 183-201 (ATANNAPSSVTATSDNGTP) shows a compositional bias: polar residues. Residues 202 to 233 (AATAQSSQVTASNAAPAANAVNDNTPPVAVAP) are compositionally biased toward low complexity.

Belongs to the RodZ family.

Its subcellular location is the cell inner membrane. Functionally, cytoskeletal protein that is involved in cell-shape control through regulation of the length of the long axis. This is Cytoskeleton protein RodZ from Erwinia tasmaniensis (strain DSM 17950 / CFBP 7177 / CIP 109463 / NCPPB 4357 / Et1/99).